Here is a 302-residue protein sequence, read N- to C-terminus: MMTMADPSKMPDLLAKAETLVEALPYLQRYAGQTFVIKYGGHAMGDPEAQRDFAEDVVLLKAVGINPVVVHGGGPQIGAMLKQLGIESTFVGGLRVTDAATAEVAEMVLAGKINKEIVGWIAGLGGRAVGISGKDANLVLAEKVKRSEADPSSGIERHVDLGFVGEPVAVDPTILANLTNDNFIPVVAPVALGADGATYNINADTMAGAIAGALGAKRFFLLTDVAGVLDKSGALLTDLDRAAIDALKADDTITGGMIPKVETCVAAVDAGVEAAVILDGRIPHAMLLEIFTTRGAGTLIHR.

Substrate-binding positions include 73 to 74, R95, and N200; that span reads GG.

The protein belongs to the acetylglutamate kinase family. ArgB subfamily.

Its subcellular location is the cytoplasm. It catalyses the reaction N-acetyl-L-glutamate + ATP = N-acetyl-L-glutamyl 5-phosphate + ADP. The protein operates within amino-acid biosynthesis; L-arginine biosynthesis; N(2)-acetyl-L-ornithine from L-glutamate: step 2/4. In terms of biological role, catalyzes the ATP-dependent phosphorylation of N-acetyl-L-glutamate. The sequence is that of Acetylglutamate kinase from Sphingopyxis alaskensis (strain DSM 13593 / LMG 18877 / RB2256) (Sphingomonas alaskensis).